Here is a 607-residue protein sequence, read N- to C-terminus: Serine/threonine-protein kinase sid2 (607 aa).

Phosphoserine occurs at positions 56, 60, 65, and 86. A compositionally biased stretch (basic and acidic residues) spans 93-108 (DRSGELSYKDNNHWSD). The disordered stretch occupies residues 93 to 118 (DRSGELSYKDNNHWSDRSSTGSPRWE). The segment covering 109-118 (RSSTGSPRWE) has biased composition (polar residues). The 301-residue stretch at 208-508 (FQTITQVGQG…LKQVMQHPYF (301 aa)) folds into the Protein kinase domain. ATP contacts are provided by residues 214-222 (VGQGGYGSV) and lysine 237. Residue tyrosine 219 is modified to Phosphotyrosine. Aspartate 331 (proton acceptor) is an active-site residue. Serine 402 carries the post-translational modification Phosphoserine. Residues 509–589 (SKIDWKNVRT…RHQKNSHPTS (81 aa)) enclose the AGC-kinase C-terminal domain. A disordered region spans residues 586–607 (HPTSSSSALSSPLSAPSFGTLL). Over residues 589 to 607 (SSSSALSSPLSAPSFGTLL) the composition is skewed to low complexity.

The protein belongs to the protein kinase superfamily. Ser/Thr protein kinase family. As to quaternary structure, interacts with mob1 and cdc11.

Its subcellular location is the cytoplasm. It is found in the cytoskeleton. The protein localises to the microtubule organizing center. The protein resides in the spindle pole body. It carries out the reaction L-seryl-[protein] + ATP = O-phospho-L-seryl-[protein] + ADP + H(+). The enzyme catalyses L-threonyl-[protein] + ATP = O-phospho-L-threonyl-[protein] + ADP + H(+). Part of a signaling pathway. Required for initiation of medial ring constriction and septation. The polypeptide is Serine/threonine-protein kinase sid2 (sid2) (Schizosaccharomyces pombe (strain 972 / ATCC 24843) (Fission yeast)).